Here is a 187-residue protein sequence, read N- to C-terminus: Protein GrpE (187 aa).

Residues 1–23 form a disordered region; it reads MNNEKELKKEETSVENKEKKVAT.

Belongs to the GrpE family. Homodimer.

Its subcellular location is the cytoplasm. Its function is as follows. Participates actively in the response to hyperosmotic and heat shock by preventing the aggregation of stress-denatured proteins, in association with DnaK and GrpE. It is the nucleotide exchange factor for DnaK and may function as a thermosensor. Unfolded proteins bind initially to DnaJ; upon interaction with the DnaJ-bound protein, DnaK hydrolyzes its bound ATP, resulting in the formation of a stable complex. GrpE releases ADP from DnaK; ATP binding to DnaK triggers the release of the substrate protein, thus completing the reaction cycle. Several rounds of ATP-dependent interactions between DnaJ, DnaK and GrpE are required for fully efficient folding. This chain is Protein GrpE, found in Mesoplasma florum (strain ATCC 33453 / NBRC 100688 / NCTC 11704 / L1) (Acholeplasma florum).